The primary structure comprises 384 residues: MSSYLFTSESVSEGHPDKIADQISDAVLDEILKQDPKARVACETYVKTGMALVGGEITTSAWVDIENLTRKVICDIGYEHSEMGFDGHSCAVLNAIGKQSADINQGVDRENPLDQGAGDQGIMFGYATNETDVLMPAAITYAHRLMEKQAEVRKSGKLAWLRPDAKSQVTLKYEDNKIVGVDAVVLSTQHSEEVSQKDLHEGVMEEIIKPVLPTEWLSKETKFFINPTGRFVIGGPMGDCGLTGRKIIVDTYGGAARHGGGAFSGKDPSKVDRSAAYAARYVAKNIVAAGLADRCEIQLSYAIGVADPTSIMVETFGTGKVANELLVSLVREFFDLRPYGLIKMLDLIQPIYRETAAYGHFGREQFPWEKVDHAEDLRIAAGLK.

An ATP-binding site is contributed by His-15. Asp-17 lines the Mg(2+) pocket. Glu-43 provides a ligand contact to K(+). 2 residues coordinate L-methionine: Glu-56 and Gln-99. A flexible loop region spans residues 99–109 (QSADINQGVDR). ATP contacts are provided by residues 164–166 (DAK), 230–231 (RF), Asp-239, 245–246 (RK), Ala-262, and Lys-266. Asp-239 contacts L-methionine. Residue Lys-270 coordinates L-methionine.

Belongs to the AdoMet synthase family. In terms of assembly, homotetramer; dimer of dimers. It depends on Mg(2+) as a cofactor. Requires K(+) as cofactor.

It localises to the cytoplasm. The enzyme catalyses L-methionine + ATP + H2O = S-adenosyl-L-methionine + phosphate + diphosphate. It participates in amino-acid biosynthesis; S-adenosyl-L-methionine biosynthesis; S-adenosyl-L-methionine from L-methionine: step 1/1. Its function is as follows. Catalyzes the formation of S-adenosylmethionine (AdoMet) from methionine and ATP. The overall synthetic reaction is composed of two sequential steps, AdoMet formation and the subsequent tripolyphosphate hydrolysis which occurs prior to release of AdoMet from the enzyme. The chain is S-adenosylmethionine synthase from Haemophilus influenzae (strain PittEE).